Here is a 297-residue protein sequence, read N- to C-terminus: tRNA uridine(34) hydroxylase (297 aa).

Residues 133–228 (RGEEVVFFDG…YGETFKDQGL (96 aa)) form the Rhodanese domain. Residue Cys188 is the Cysteine persulfide intermediate of the active site.

It belongs to the TrhO family.

The enzyme catalyses uridine(34) in tRNA + AH2 + O2 = 5-hydroxyuridine(34) in tRNA + A + H2O. Catalyzes oxygen-dependent 5-hydroxyuridine (ho5U) modification at position 34 in tRNAs. This is tRNA uridine(34) hydroxylase from Arthrobacter sp. (strain FB24).